The primary structure comprises 910 residues: Valine--tRNA ligase (910 aa).

Positions 45–55 (PNVTGSLHMGH) match the 'HIGH' region motif. Residues 554–558 (KMSKS) carry the 'KMSKS' region motif. Residue lysine 557 coordinates ATP. Positions 842–910 (DLQAEAARLA…TAESRIRDAS (69 aa)) form a coiled coil.

It belongs to the class-I aminoacyl-tRNA synthetase family. ValS type 1 subfamily. In terms of assembly, monomer.

The protein resides in the cytoplasm. The enzyme catalyses tRNA(Val) + L-valine + ATP = L-valyl-tRNA(Val) + AMP + diphosphate. Functionally, catalyzes the attachment of valine to tRNA(Val). As ValRS can inadvertently accommodate and process structurally similar amino acids such as threonine, to avoid such errors, it has a 'posttransfer' editing activity that hydrolyzes mischarged Thr-tRNA(Val) in a tRNA-dependent manner. The polypeptide is Valine--tRNA ligase (Brucella suis biovar 1 (strain 1330)).